Here is a 203-residue protein sequence, read N- to C-terminus: Orotate phosphoribosyltransferase (203 aa).

Residues R94, K98, H100, and E120–S128 each bind 5-phospho-alpha-D-ribose 1-diphosphate. Orotate is bound at residue S124.

It belongs to the purine/pyrimidine phosphoribosyltransferase family. PyrE subfamily. As to quaternary structure, homodimer. Requires Mg(2+) as cofactor.

It catalyses the reaction orotidine 5'-phosphate + diphosphate = orotate + 5-phospho-alpha-D-ribose 1-diphosphate. Its pathway is pyrimidine metabolism; UMP biosynthesis via de novo pathway; UMP from orotate: step 1/2. Its function is as follows. Catalyzes the transfer of a ribosyl phosphate group from 5-phosphoribose 1-diphosphate to orotate, leading to the formation of orotidine monophosphate (OMP). This chain is Orotate phosphoribosyltransferase, found in Staphylococcus aureus (strain Mu50 / ATCC 700699).